The sequence spans 220 residues: Deoxyribose-phosphate aldolase (220 aa).

Catalysis depends on Asp89, which acts as the Proton donor/acceptor. Lys151 (schiff-base intermediate with acetaldehyde) is an active-site residue. Residue Lys180 is the Proton donor/acceptor of the active site.

Belongs to the DeoC/FbaB aldolase family. DeoC type 1 subfamily.

The protein resides in the cytoplasm. The catalysed reaction is 2-deoxy-D-ribose 5-phosphate = D-glyceraldehyde 3-phosphate + acetaldehyde. Its pathway is carbohydrate degradation; 2-deoxy-D-ribose 1-phosphate degradation; D-glyceraldehyde 3-phosphate and acetaldehyde from 2-deoxy-alpha-D-ribose 1-phosphate: step 2/2. Catalyzes a reversible aldol reaction between acetaldehyde and D-glyceraldehyde 3-phosphate to generate 2-deoxy-D-ribose 5-phosphate. This chain is Deoxyribose-phosphate aldolase, found in Lactococcus lactis subsp. lactis (strain IL1403) (Streptococcus lactis).